A 907-amino-acid polypeptide reads, in one-letter code: Schlafen family member 13 (907 aa).

The n'-domain region stretch occupies residues 1 to 353 (MEIHPSLVVE…WVRMMVDIGP (353 aa)). Residues E205 and E210 contribute to the active site. Residues H281, C283, and C318 each contribute to the Zn(2+) site. Residue 604-611 (GMPGSGKT) participates in ATP binding.

This sequence belongs to the Schlafen family. Subgroup III subfamily. The cofactor is Mg(2+).

It is found in the cytoplasm. Functionally, endoribonuclease that cleaves tRNAs and rRNAs. Cleaves tRNAs 11 nucleotides from the 3'-terminus at the acceptor stem. Does not act on tRNA(Sec). This Rattus norvegicus (Rat) protein is Schlafen family member 13.